Reading from the N-terminus, the 90-residue chain is Small ribosomal subunit protein uS15 (90 aa).

It belongs to the universal ribosomal protein uS15 family. Part of the 30S ribosomal subunit. Forms a bridge to the 50S subunit in the 70S ribosome, contacting the 23S rRNA.

Its function is as follows. One of the primary rRNA binding proteins, it binds directly to 16S rRNA where it helps nucleate assembly of the platform of the 30S subunit by binding and bridging several RNA helices of the 16S rRNA. Functionally, forms an intersubunit bridge (bridge B4) with the 23S rRNA of the 50S subunit in the ribosome. In Helicobacter pylori (strain Shi470), this protein is Small ribosomal subunit protein uS15.